The sequence spans 163 residues: Nucleotide-binding protein NT01EI_1072 (163 aa).

This sequence belongs to the YajQ family.

In terms of biological role, nucleotide-binding protein. The sequence is that of Nucleotide-binding protein NT01EI_1072 from Edwardsiella ictaluri (strain 93-146).